A 493-amino-acid chain; its full sequence is Alpha-amylase-related protein (493 aa).

A signal peptide spans 1 to 19 (MFKFALTLTLCLAGSLSLA). Gln-20 carries the post-translational modification Pyrrolidone carboxylic acid. A disulfide bridge connects residues Cys-47 and Cys-103. The Ca(2+) site is built by Asn-117, Gln-168, and Asp-177. Cys-156 and Cys-170 are disulfide-bonded. A chloride-binding site is contributed by Arg-205. The active-site Nucleophile is Asp-207. His-211 provides a ligand contact to Ca(2+). The active-site Proton donor is Glu-244. Residues Asn-307 and Arg-342 each coordinate chloride. Disulfide bonds link Cys-375–Cys-381, Cys-417–Cys-440, and Cys-447–Cys-459.

The protein belongs to the glycosyl hydrolase 13 family. Monomer. Ca(2+) serves as cofactor. Requires chloride as cofactor. Midgut and fat body.

Its subcellular location is the secreted. It catalyses the reaction Endohydrolysis of (1-&gt;4)-alpha-D-glucosidic linkages in polysaccharides containing three or more (1-&gt;4)-alpha-linked D-glucose units.. This chain is Alpha-amylase-related protein (Amyrel), found in Drosophila melanogaster (Fruit fly).